We begin with the raw amino-acid sequence, 401 residues long: Adenylosuccinate synthetase (401 aa).

GTP-binding positions include 12 to 18 (GDEGKGK) and 40 to 42 (GHT). Aspartate 13 acts as the Proton acceptor in catalysis. Positions 13 and 40 each coordinate Mg(2+). Residues 13-16 (DEGK), 38-41 (NAGH), threonine 128, arginine 142, glutamine 212, threonine 227, and arginine 290 each bind IMP. The Proton donor role is filled by histidine 41. Position 286–292 (286–292 (ATTRRPR)) interacts with substrate. GTP-binding positions include arginine 292, 318–320 (KAD), and 390–392 (STG).

It belongs to the adenylosuccinate synthetase family. Homodimer. Mg(2+) is required as a cofactor.

Its subcellular location is the cytoplasm. It catalyses the reaction IMP + L-aspartate + GTP = N(6)-(1,2-dicarboxyethyl)-AMP + GDP + phosphate + 2 H(+). The protein operates within purine metabolism; AMP biosynthesis via de novo pathway; AMP from IMP: step 1/2. Its function is as follows. Plays an important role in the de novo pathway of purine nucleotide biosynthesis. Catalyzes the first committed step in the biosynthesis of AMP from IMP. The chain is Adenylosuccinate synthetase from Pseudothermotoga lettingae (strain ATCC BAA-301 / DSM 14385 / NBRC 107922 / TMO) (Thermotoga lettingae).